Here is a 299-residue protein sequence, read N- to C-terminus: Bifunctional protein FolD (299 aa).

NADP(+) contacts are provided by residues 168-170 (GRS), serine 193, and isoleucine 234.

This sequence belongs to the tetrahydrofolate dehydrogenase/cyclohydrolase family. In terms of assembly, homodimer.

It carries out the reaction (6R)-5,10-methylene-5,6,7,8-tetrahydrofolate + NADP(+) = (6R)-5,10-methenyltetrahydrofolate + NADPH. The enzyme catalyses (6R)-5,10-methenyltetrahydrofolate + H2O = (6R)-10-formyltetrahydrofolate + H(+). It functions in the pathway one-carbon metabolism; tetrahydrofolate interconversion. Its function is as follows. Catalyzes the oxidation of 5,10-methylenetetrahydrofolate to 5,10-methenyltetrahydrofolate and then the hydrolysis of 5,10-methenyltetrahydrofolate to 10-formyltetrahydrofolate. The sequence is that of Bifunctional protein FolD from Bartonella quintana (strain Toulouse) (Rochalimaea quintana).